The following is a 432-amino-acid chain: Gamma-glutamyl phosphate reductase (432 aa).

It belongs to the gamma-glutamyl phosphate reductase family.

The protein localises to the cytoplasm. The enzyme catalyses L-glutamate 5-semialdehyde + phosphate + NADP(+) = L-glutamyl 5-phosphate + NADPH + H(+). It participates in amino-acid biosynthesis; L-proline biosynthesis; L-glutamate 5-semialdehyde from L-glutamate: step 2/2. Catalyzes the NADPH-dependent reduction of L-glutamate 5-phosphate into L-glutamate 5-semialdehyde and phosphate. The product spontaneously undergoes cyclization to form 1-pyrroline-5-carboxylate. In Methylorubrum populi (strain ATCC BAA-705 / NCIMB 13946 / BJ001) (Methylobacterium populi), this protein is Gamma-glutamyl phosphate reductase.